The chain runs to 938 residues: Collagen alpha-1(I) chain (938 aa).

The tract at residues 1 to 938 (GGISVPGPMG…PGPPGPPGPP (938 aa)) is disordered. Proline 18, proline 21, proline 24, proline 33, proline 36, proline 39, proline 54, proline 69, proline 75, proline 84, and proline 90 each carry 4-hydroxyproline. The span at 26 to 45 (PQGFQGPPGEPGEPGASGPM) shows a compositional bias: low complexity. The segment covering 57–71 (NGDDGEAGKPGRPGE) has biased composition (basic and acidic residues). At lysine 93 the chain carries 5-hydroxylysine; alternate. O-linked (Gal...) hydroxylysine; alternate glycosylation is present at lysine 93. Serine 99 bears the Phosphoserine mark. The span at 107–135 (DAGPAGPKGRPGASGPAGARGNDGATGAA) shows a compositional bias: low complexity. 4-hydroxyproline is present on residues proline 117, proline 138, proline 147, proline 150, proline 177, proline 180, proline 192, proline 198, proline 207, proline 213, proline 216, and proline 231. Residues 137 to 149 (PPGPTGPAGPPGF) are compositionally biased toward pro residues. Over residues 183 to 222 (AGAAGPAGNPGADGQPGAKGANGAPGIAGAPGFPGARGPS) the composition is skewed to low complexity. Lysine 234 is modified (5-hydroxylysine). 4-hydroxyproline occurs at positions 240, 243, 255, 264, 279, 285, 294, and 300. Positions 289–298 (GERGGPGSRG) are enriched in gly residues. Residue lysine 309 is modified to 5-hydroxylysine. Proline 314, proline 323, proline 329, proline 335, proline 344, proline 347, proline 356, proline 365, proline 371, proline 383, proline 392, proline 401, proline 404, proline 422, proline 439, proline 445, proline 451, proline 458, proline 464, proline 476, proline 485, proline 497, proline 503, proline 509, and proline 518 each carry 4-hydroxyproline. Positions 338–364 (KGLTGSPGSPGPDGKTGPPGPAGQDGR) are enriched in low complexity. The segment covering 373-392 (ARGQAGVMGFPGPKGAAGEP) has biased composition (low complexity). Position 530 is a 5-hydroxylysine (lysine 530). A 4-hydroxyproline mark is found at proline 536, proline 551, and proline 557. The span at 563–577 (SGPSGPAGPTGARGA) shows a compositional bias: low complexity. Serine 566 is modified (phosphoserine). 4-hydroxyproline occurs at positions 578, 584, 587, 596, 602, 620, 629, and 638. A compositionally biased stretch (low complexity) spans 590-617 (AGFAGPPGADGQPGAKGEPGDAGAKGDA). A compositionally biased stretch (pro residues) spans 619–631 (PPGPAGPTGPPGP). Lysine 641 is subject to 5-hydroxylysine. Low complexity predominate over residues 646 to 662 (SAGPPGATGFPGAAGRV). 2 positions are modified to 4-hydroxyproline: proline 650 and proline 656. Proline 664 bears the 3-hydroxyproline mark. A 4-hydroxyproline mark is found at proline 665, proline 674, proline 677, proline 693, proline 703, proline 712, proline 730, proline 739, proline 742, proline 748, proline 763, proline 769, proline 775, proline 784, and proline 790. Positions 762–772 (PPGPMGPPGLA) are enriched in pro residues. At lysine 799 the chain carries 5-hydroxylysine. The segment covering 807–822 (PGPPGAPGAPGAPGPV) has biased composition (pro residues). 3 positions are modified to 4-hydroxyproline: proline 810, proline 813, and proline 816. Over residues 843–867 (AGPAGARGPAGPQGPRRGFSGLQGP) the composition is skewed to low complexity. Residues proline 871, proline 874, proline 892, and proline 907 each carry the 4-hydroxyproline modification. The span at 874-907 (PGEQGPSGASGPAGPRGPPGSAGSPGKDGLNGLP) shows a compositional bias: low complexity. Position 912 is a 3-hydroxyproline (proline 912). Proline 913 carries the post-translational modification 4-hydroxyproline. The span at 923–938 (VGPPGPPGPPGPPGPP) shows a compositional bias: pro residues. Residue proline 925 is modified to 3-hydroxyproline. Proline 926 carries the 4-hydroxyproline modification. Proline 928 is modified (3-hydroxyproline). Proline 929 is subject to 4-hydroxyproline. The residue at position 931 (proline 931) is a 3-hydroxyproline. 4-hydroxyproline occurs at positions 932, 935, and 938.

The protein belongs to the fibrillar collagen family. As to quaternary structure, trimers of one alpha 2(I) and two alpha 1(I) chains. Post-translationally, contains mostly 4-hydroxyproline. Proline residues at the third position of the tripeptide repeating unit (G-X-Y) are hydroxylated in some or all of the chains. Contains 3-hydroxyproline at a few sites. This modification occurs on the first proline residue in the sequence motif Gly-Pro-Hyp, where Hyp is 4-hydroxyproline. In terms of processing, lysine residues at the third position of the tripeptide repeating unit (G-X-Y) are 5-hydroxylated in some or all of the chains. Post-translationally, O-glycosylated on hydroxylated lysine residues. The O-linked glycan consists of a Glc-Gal disaccharide. As to expression, expressed in bones.

It localises to the secreted. It is found in the extracellular space. The protein resides in the extracellular matrix. Type I collagen is a member of group I collagen (fibrillar forming collagen). The chain is Collagen alpha-1(I) chain from Megalonyx jeffersonii (Jefferson's ground sloth).